The chain runs to 105 residues: Translation initiation factor 1A (105 aa).

The S1-like domain occupies 18-92 (IRVKLPNKRI…DKCDIIYRYT (75 aa)).

The protein belongs to the eIF-1A family.

Its function is as follows. Seems to be required for maximal rate of protein biosynthesis. Enhances ribosome dissociation into subunits and stabilizes the binding of the initiator Met-tRNA(I) to 40 S ribosomal subunits. This chain is Translation initiation factor 1A (eIF1A), found in Methanocorpusculum labreanum (strain ATCC 43576 / DSM 4855 / Z).